Consider the following 261-residue polypeptide: Transcription antitermination protein NusB (261 aa).

The tract at residues 168–261 (ARVEDQPSDD…DLHKKDTTDD (94 aa)) is disordered. A compositionally biased stretch (polar residues) spans 217-228 (VDTTSGNASDPE). The span at 242–261 (PTSKDHELATDLHKKDTTDD) shows a compositional bias: basic and acidic residues.

The protein belongs to the NusB family.

In terms of biological role, involved in transcription antitermination. Required for transcription of ribosomal RNA (rRNA) genes. Binds specifically to the boxA antiterminator sequence of the ribosomal RNA (rrn) operons. The polypeptide is Transcription antitermination protein NusB (Cutibacterium acnes (strain DSM 16379 / KPA171202) (Propionibacterium acnes)).